Consider the following 320-residue polypeptide: L-lactate dehydrogenase 2 (320 aa).

The NAD(+) site is built by Val16, Asp37, Lys42, and Tyr69. Arg94 is a substrate binding site. Residues Ser107, 124 to 126, and Thr149 contribute to the NAD(+) site; that span reads VTN. Residue 126 to 129 coordinates substrate; the sequence is NPVD. 154-157 lines the substrate pocket; the sequence is DTAR. The beta-D-fructose 1,6-bisphosphate site is built by Arg159 and His174. Residue His181 is the Proton acceptor of the active site. A substrate-binding site is contributed by Thr235.

The protein belongs to the LDH/MDH superfamily. LDH family. As to quaternary structure, homotetramer.

It is found in the cytoplasm. It catalyses the reaction (S)-lactate + NAD(+) = pyruvate + NADH + H(+). The protein operates within fermentation; pyruvate fermentation to lactate; (S)-lactate from pyruvate: step 1/1. With respect to regulation, allosterically activated by fructose 1,6-bisphosphate (FBP). Catalyzes the conversion of lactate to pyruvate. The polypeptide is L-lactate dehydrogenase 2 (Clostridium acetobutylicum (strain ATCC 824 / DSM 792 / JCM 1419 / IAM 19013 / LMG 5710 / NBRC 13948 / NRRL B-527 / VKM B-1787 / 2291 / W)).